A 355-amino-acid chain; its full sequence is F-box only protein 32 (355 aa).

The Nuclear localization signal motif lies at 62–67; it reads KKRKKD. The Nuclear export signal motif lies at 169–173; the sequence is LLQTL. The F-box domain maps to 223–271; that stretch reads LTFTDLPLCLQLNIMQRLSDGRDLVSLGQVAPDLHVLSEDRLLWKKLCQ. The short motif at 280-295 is the Bipartite nuclear localization signal element; it reads RKRLILSDKGQLDWKK.

In terms of assembly, part of the SCF (SKP1-CUL1-F-box) E3 ubiquitin-protein ligase complex SCF(FBXO32) formed of CUL1, SKP1, RBX1 and FBXO32.

The protein resides in the cytoplasm. It is found in the nucleus. It participates in protein modification; protein ubiquitination. Functionally, substrate recognition component of a SCF (SKP1-CUL1-F-box protein) E3 ubiquitin-protein ligase complex which mediates the ubiquitination and subsequent proteasomal degradation of target proteins. Probably recognizes and binds to phosphorylated target proteins during skeletal muscle atrophy. Recognizes TERF1. The sequence is that of F-box only protein 32 (FBXO32) from Sus scrofa (Pig).